The chain runs to 100 residues: UPF0473 protein Csac_1599 (100 aa).

It belongs to the UPF0473 family.

This Caldicellulosiruptor saccharolyticus (strain ATCC 43494 / DSM 8903 / Tp8T 6331) protein is UPF0473 protein Csac_1599.